We begin with the raw amino-acid sequence, 668 residues long: L-type lectin-domain containing receptor kinase I.7 (668 aa).

An N-terminal signal peptide occupies residues 1–21 (MIRGLLLGIIWMIFCVCSSFQ). The Extracellular portion of the chain corresponds to 22 to 285 (QETPFVYNNF…SSTKKKSTSP (264 aa)). The legume-lectin like stretch occupies residues 24 to 256 (TPFVYNNFGH…YQYILGWSFS (233 aa)). 5 N-linked (GlcNAc...) asparagine glycosylation sites follow: Asn-56, Asn-125, Asn-167, Asn-201, and Asn-223. A helical transmembrane segment spans residues 286 to 306 (VLSVLLGLIAFIVLGILVVAY). Over 307–668 (LYRRNLYSEV…THSVLYGSGR (362 aa)) the chain is Cytoplasmic. The Protein kinase domain maps to 341 to 620 (FNRSEFLGRG…LNGNLALPEF (280 aa)). Residues 347–355 (LGRGGFGEV) and Lys-372 each bind ATP. Asp-468 acts as the Proton acceptor in catalysis.

The protein in the C-terminal section; belongs to the protein kinase superfamily. Ser/Thr protein kinase family. This sequence in the N-terminal section; belongs to the leguminous lectin family.

The protein resides in the cell membrane. It carries out the reaction L-seryl-[protein] + ATP = O-phospho-L-seryl-[protein] + ADP + H(+). It catalyses the reaction L-threonyl-[protein] + ATP = O-phospho-L-threonyl-[protein] + ADP + H(+). Functionally, involved in resistance response to the pathogenic oomycetes Phytophthora infestans and Phytophthora capsici. The polypeptide is L-type lectin-domain containing receptor kinase I.7 (Arabidopsis thaliana (Mouse-ear cress)).